Here is a 331-residue protein sequence, read N- to C-terminus: MADIIETPVSRRLSTVKNIIIVLSGKGGVGKSSSSVQLALSLLAQSPTNRVGLIDLDITGPSLPRMVGLDTPTATVHQSSAGWVPVYVDQGRRLGVMSIGFLLKDRGDSVVWRGPKKDGMIRQFLSEVRWGDLDYLVIDTPPGTSDEHISLLTHLHPLFTPTMSNATTPTSILISTPQTTALNDTLKSLSFTRKLSLPVMGLVENMAGYVCPCCGEISDTFGKGGGEAMAHKEGVGFLGRVPIDTVLVSLLDAVSKGEVLGEGAVEHTSDEAAEGQTNGSTEHFPLLDKYLETTSSKVWKDITQKLVDKIEQHKSDIRARLESSSETLAIA.

An ATP-binding site is contributed by 25–32; it reads GKGGVGKS. Positions 211 and 214 each coordinate [4Fe-4S] cluster.

The protein belongs to the Mrp/NBP35 ATP-binding proteins family. NUBP2/CFD1 subfamily. Heterotetramer of 2 NBP35 and 2 CFD1 chains. [4Fe-4S] cluster is required as a cofactor.

The protein localises to the cytoplasm. In terms of biological role, component of the cytosolic iron-sulfur (Fe/S) protein assembly (CIA) machinery. Required for maturation of extramitochondrial Fe-S proteins. The NBP35-CFD1 heterotetramer forms a Fe-S scaffold complex, mediating the de novo assembly of an Fe-S cluster and its transfer to target apoproteins. In Cryptococcus neoformans var. neoformans serotype D (strain B-3501A) (Filobasidiella neoformans), this protein is Cytosolic Fe-S cluster assembly factor CFD1.